The chain runs to 173 residues: Crossover junction endodeoxyribonuclease RuvC (173 aa).

Residues D8, E67, and D139 contribute to the active site. Mg(2+)-binding residues include D8, E67, and D139.

Belongs to the RuvC family. Homodimer which binds Holliday junction (HJ) DNA. The HJ becomes 2-fold symmetrical on binding to RuvC with unstacked arms; it has a different conformation from HJ DNA in complex with RuvA. In the full resolvosome a probable DNA-RuvA(4)-RuvB(12)-RuvC(2) complex forms which resolves the HJ. Mg(2+) is required as a cofactor.

Its subcellular location is the cytoplasm. The catalysed reaction is Endonucleolytic cleavage at a junction such as a reciprocal single-stranded crossover between two homologous DNA duplexes (Holliday junction).. The RuvA-RuvB-RuvC complex processes Holliday junction (HJ) DNA during genetic recombination and DNA repair. Endonuclease that resolves HJ intermediates. Cleaves cruciform DNA by making single-stranded nicks across the HJ at symmetrical positions within the homologous arms, yielding a 5'-phosphate and a 3'-hydroxyl group; requires a central core of homology in the junction. The consensus cleavage sequence is 5'-(A/T)TT(C/G)-3'. Cleavage occurs on the 3'-side of the TT dinucleotide at the point of strand exchange. HJ branch migration catalyzed by RuvA-RuvB allows RuvC to scan DNA until it finds its consensus sequence, where it cleaves and resolves the cruciform DNA. In Tolumonas auensis (strain DSM 9187 / NBRC 110442 / TA 4), this protein is Crossover junction endodeoxyribonuclease RuvC.